We begin with the raw amino-acid sequence, 681 residues long: MTEQSSKSHPSFMSTEYSLPVFSSQYSDIENKDVLKSNSWDPYAANAPIALSEIPSSSKSGKTNGSKAAVESGLASGAFGNRTGNMNRNTSMSGYTFGSSNFVPYNLLSNTPSFTTSHSSSTTFVPPATMGGGLNNLSSPSSSLYLPGSASYQRSNSKNSSASILQMNTTLDDIPILLRRPGLSSYTPGPSTSRRSISSSSNLGGNPGLIANNPSASKNFAFTSGSSSTNNSTTSSSSMANGLQSISKHSAAFPLLSNATSFFGENLTPSLAASTASTGSTDSSGSNIANTLIAPTPTISPPSANTVGNPSPADTPGFNVPSLISDDPSVSSSLSSSVASLSLQNSNILSFCKDQHGCRYLQRLLEKKNQSHIDAVFAETHPYLAVLMVDAFGNYLCQKLFEHASEAQRSTFIQIIAPKLVPISFNMHGTRALQKIIDLVSSPDQISCIVNALRPNVVLLTKDLNGNHVIQKCLNKFSQEDCQFIFDAICEDPLDVSTHRHGCCVVQRCFDHASPAQIEQLVEHIVPHALTLVQDAFGNYVLQYVLELNNPNHTEAIISYFLYKVRALSTQKFSSNVMEKCIFFAPAAIKEKLISELMDEKHLPKLLRDSFANYVIQTALDNASVKQRAELVERIKPLIPSIKNTPCGRRILSKLERRHPSSKEKPIVYSNSERVNTSSSA.

Disordered regions lie at residues 180–210 and 273–322; these read RPGL…PGLI and ASTA…NVPS. Low complexity-rich tracts occupy residues 187 to 210 and 273 to 286; these read TPGP…PGLI and ASTA…SSGS. Residues 319 to 659 enclose the PUM-HD domain; that stretch reads NVPSLISDDP…RILSKLERRH (341 aa). Pumilio repeat units lie at residues 342 to 378, 379 to 414, 415 to 451, 452 to 487, 488 to 523, 524 to 559, 560 to 595, and 596 to 633; these read SLQN…AVFA, ETHP…TFIQ, IIAP…CIVN, ALRP…FIFD, AICE…QLVE, HIVP…AIIS, YFLY…KLIS, and ELMD…ELVE. The segment covering 656-666 has biased composition (basic and acidic residues); sequence ERRHPSSKEKP. Residues 656–681 form a disordered region; it reads ERRHPSSKEKPIVYSNSERVNTSSSA. Positions 669-681 are enriched in polar residues; that stretch reads YSNSERVNTSSSA.

In Schizosaccharomyces pombe (strain 972 / ATCC 24843) (Fission yeast), this protein is Pumilio domain-containing protein C6G9.14.